The chain runs to 218 residues: MRLILLGAPGAGKGTQATFICQKYGIPQISTGDMLRAAVKAGTPLGVEAKKIMDAGALVSDDLIINLVKERIAQPDCAKGFLFDGFPRTIPQADAMKAAGVKIDYVLEIDVPFEAIIERMSGRRSHTASGRTYHVKYNPPKVEGKDDVTGEPLIQREDDKEETVRKRLEVYSAQTRPLVEYYSSWAKTSPQAAPKYRAISGMGGVDEITERAFQALSS.

10–15 (GAGKGT) contributes to the ATP binding site. An NMP region spans residues 30–59 (STGDMLRAAVKAGTPLGVEAKKIMDAGALV). Residues Thr31, Arg36, 57 to 59 (ALV), 85 to 88 (GFPR), and Gln92 contribute to the AMP site. Positions 122 to 159 (GRRSHTASGRTYHVKYNPPKVEGKDDVTGEPLIQREDD) are LID. ATP is bound by residues Arg123 and 132–133 (TY). The AMP site is built by Arg156 and Arg167. Gly203 provides a ligand contact to ATP.

It belongs to the adenylate kinase family. In terms of assembly, monomer.

Its subcellular location is the cytoplasm. The enzyme catalyses AMP + ATP = 2 ADP. The protein operates within purine metabolism; AMP biosynthesis via salvage pathway; AMP from ADP: step 1/1. Its function is as follows. Catalyzes the reversible transfer of the terminal phosphate group between ATP and AMP. Plays an important role in cellular energy homeostasis and in adenine nucleotide metabolism. The protein is Adenylate kinase of Polaromonas sp. (strain JS666 / ATCC BAA-500).